The chain runs to 130 residues: RutC family protein in leuC 5'region (130 aa).

It belongs to the RutC family.

This Leuconostoc mesenteroides subsp. cremoris protein is RutC family protein in leuC 5'region.